A 141-amino-acid chain; its full sequence is Nucleoside diphosphate kinase (141 aa).

Residues Lys-11, Phe-59, Arg-87, Thr-93, Arg-104, and Asn-114 each coordinate ATP.

Belongs to the NDK family. As to quaternary structure, homotetramer. It depends on Mg(2+) as a cofactor.

It is found in the cytoplasm. It catalyses the reaction a 2'-deoxyribonucleoside 5'-diphosphate + ATP = a 2'-deoxyribonucleoside 5'-triphosphate + ADP. The enzyme catalyses a ribonucleoside 5'-diphosphate + ATP = a ribonucleoside 5'-triphosphate + ADP. Functionally, major role in the synthesis of nucleoside triphosphates other than ATP. The ATP gamma phosphate is transferred to the NDP beta phosphate via a ping-pong mechanism, using a phosphorylated active-site intermediate. The polypeptide is Nucleoside diphosphate kinase (Saccharophagus degradans (strain 2-40 / ATCC 43961 / DSM 17024)).